Consider the following 230-residue polypeptide: Small ribosomal subunit protein uS3 (230 aa).

Residues Val39–Arg107 enclose the KH type-2 domain.

It belongs to the universal ribosomal protein uS3 family. Part of the 30S ribosomal subunit. Forms a tight complex with proteins S10 and S14.

Binds the lower part of the 30S subunit head. Binds mRNA in the 70S ribosome, positioning it for translation. In Shewanella amazonensis (strain ATCC BAA-1098 / SB2B), this protein is Small ribosomal subunit protein uS3.